We begin with the raw amino-acid sequence, 130 residues long: ATP synthase epsilon chain (130 aa).

Belongs to the ATPase epsilon chain family. F-type ATPases have 2 components, CF(1) - the catalytic core - and CF(0) - the membrane proton channel. CF(1) has five subunits: alpha(3), beta(3), gamma(1), delta(1), epsilon(1). CF(0) has three main subunits: a, b and c.

The protein resides in the cell inner membrane. In terms of biological role, produces ATP from ADP in the presence of a proton gradient across the membrane. The protein is ATP synthase epsilon chain of Sulfurimonas denitrificans (strain ATCC 33889 / DSM 1251) (Thiomicrospira denitrificans (strain ATCC 33889 / DSM 1251)).